The sequence spans 72 residues: Heat-stable enterotoxin ST-IA/ST-P (72 aa).

A signal peptide spans 1–19 (MKKLMLAIFISVLSFPSFS). Residues 20 to 54 (QSTESLDSSKEKITLETKKCDVVKNNSEKKSENMN) constitute a propeptide that is removed on maturation. 3 disulfides stabilise this stretch: cysteine 59-cysteine 64, cysteine 60-cysteine 68, and cysteine 63-cysteine 71.

It belongs to the heat-stable enterotoxin family.

It is found in the secreted. Toxin which activates the particulate form of guanylate cyclase and increases cyclic GMP levels within the host intestinal epithelial cells. This chain is Heat-stable enterotoxin ST-IA/ST-P (sta1), found in Escherichia coli.